We begin with the raw amino-acid sequence, 553 residues long: T-complex protein 1 subunit eta (553 aa).

Glycine 41 is an ADP binding site. Glycine 41 provides a ligand contact to ATP. Aspartate 92 contacts Mg(2+). Positions 93, 94, 95, 96, 164, and 165 each coordinate ADP. Glycine 93 contributes to the ATP binding site. Serine 96 provides a ligand contact to ATP. ATP is bound by residues arginine 398 and glycine 409. 3 residues coordinate ADP: glycine 409, glutamate 494, and arginine 499. Arginine 499 contributes to the ATP binding site. The disordered stretch occupies residues 523 to 553 (PRSTVDAPPGGRGRGRGQTPQPLRPRSVALS). Positions 539-553 (GQTPQPLRPRSVALS) are enriched in low complexity.

Component of the chaperonin-containing T-complex (TRiC), a hexadecamer composed of two identical back-to-back stacked rings enclosing a protein folding chamber. Each ring is made up of eight different subunits: TCP1/CCT1, CCT2, CCT3, CCT4, CCT5, CCT6A/CCT6, CCT7, CCT8.

It is found in the cytoplasm. The enzyme catalyses ATP + H2O = ADP + phosphate + H(+). Component of the chaperonin-containing T-complex (TRiC), a molecular chaperone complex that assists the folding of actin, tubulin and other proteins upon ATP hydrolysis. In Gallus gallus (Chicken), this protein is T-complex protein 1 subunit eta.